The following is a 147-amino-acid chain: Large ribosomal subunit protein uL13 (147 aa).

Belongs to the universal ribosomal protein uL13 family. In terms of assembly, part of the 50S ribosomal subunit.

Its function is as follows. This protein is one of the early assembly proteins of the 50S ribosomal subunit, although it is not seen to bind rRNA by itself. It is important during the early stages of 50S assembly. The polypeptide is Large ribosomal subunit protein uL13 (Leuconostoc citreum (strain KM20)).